We begin with the raw amino-acid sequence, 281 residues long: Ribosomal RNA large subunit methyltransferase J (281 aa).

S-adenosyl-L-methionine is bound by residues H19, H42, S101, E119, 144-145 (NG), and D165. D165 (proton acceptor) is an active-site residue.

The protein belongs to the RlmJ family. In terms of assembly, monomer.

It catalyses the reaction adenosine(2030) in 23S rRNA + S-adenosyl-L-methionine = N(6)-methyladenosine(2030) in 23S rRNA + S-adenosyl-L-homocysteine + H(+). In terms of biological role, specifically methylates the adenine in position 2030 of 23S rRNA. The protein is Ribosomal RNA large subunit methyltransferase J of Haemophilus influenzae (strain ATCC 51907 / DSM 11121 / KW20 / Rd).